The sequence spans 565 residues: Tetratricopeptide repeat protein 39A (565 aa).

TPR repeat units follow at residues 271-304 (AIFL…QQVW), 461-494 (CLIQ…EKKL), and 502-535 (PNAL…YKVY).

The protein belongs to the TTC39 family.

The chain is Tetratricopeptide repeat protein 39A (ttc39a) from Danio rerio (Zebrafish).